The primary structure comprises 1207 residues: AP-3 complex subunit delta-1 (1207 aa).

A2 is subject to N-acetylalanine. HEAT repeat units follow at residues 34–71 (KYISQCIDEIKQELKQDNIAVKANAVCKLTYLQMLGYD), 142–179 (DLARDLANDIMTLMSHTKPYIRKKAVLIMYKVFLKYPE), 180–216 (SLRPAFPRLKEKLEDPDPGVQSAAVNVICELARRNPK), 218–254 (YLSLAPLFFKLMTSSTNNWVLIKIIKLFGALTPLEPR), 257–296 (KKLIEPLTNLIHSTSAMSLLYECVNTVIAVLISLSSGMPN), 298–336 (SASIQLCVQKLRILIEDSDQNLKYLGLLAMSKILRTHPK), 337–373 (SVQAHKDLVLQCLDDKDESIRLRALDLLYGMVSKKNL), 375–409 (EIVKKLMTHVDKAEGTTYRDELLTKIIDICSQSNY), and 521–558 (VYVQNVVKLYAAILQQKEQAADTSAAQEVTQLLVERLP). Disordered regions lie at residues 630–695 (PLSD…RYQD) and 731–970 (RRHR…EEPL). Phosphoserine is present on residues S632, S634, and S636. Positions 648-675 (EEQRHTKPRAPEADEQELARRREARRQE) are enriched in basic and acidic residues. Residues 659 to 679 (EADEQELARRREARRQEQANN) are a coiled coil. S688 is modified (phosphoserine). Positions 725 to 752 (VKLEEERRHRQRLEKDKRKKKKRERERR) form a coiled coil. The span at 731 to 740 (RRHRQRLEKD) shows a compositional bias: basic and acidic residues. Over residues 741 to 759 (KRKKKKRERERRGTRRHSS) the composition is skewed to basic residues. 2 positions are modified to phosphoserine: S758 and S759. T762 is modified (phosphothreonine). Residues S764, S788, and S829 each carry the phosphoserine modification. A compositionally biased stretch (acidic residues) spans 777-794 (VTEEMPENALPSDEDDKD). The segment covering 795–840 (PNDPYRALDIDLDKPLADSEKLPVQKHRNAETSKSPEKEDVPLVEK) has biased composition (basic and acidic residues). Basic residues predominate over residues 841–854 (KSKKPKKKEKKHKE). A coiled-coil region spans residues 846 to 870 (KKKEKKHKEKEREKKKKEVEKGEDL). Composition is skewed to basic and acidic residues over residues 855–869 (KEREKKKKEVEKGED) and 899–908 (EGQEEPRGEE). The span at 923 to 933 (PSKHKKKKHKK) shows a compositional bias: basic residues. Over residues 952 to 969 (ADEEAAEPVENGTLEEEP) the composition is skewed to acidic residues.

The protein belongs to the adaptor complexes large subunit family. As to quaternary structure, AP-3 associates with the BLOC-1 complex. Adaptor protein complex 3 (AP-3) is a heterotetramer composed of two large adaptins (delta-type subunit AP3D1 and beta-type subunit AP3B1 or AP3B2), a medium adaptin (mu-type subunit AP3M1 or AP3M2) and a small adaptin (sigma-type subunit APS1 or AP3S2). Interacts with SLC30A2. Interacts with CLN3 (via dileucine motif); this interaction facilitates lysosomal targeting.

It is found in the cytoplasm. The protein resides in the golgi apparatus membrane. In terms of biological role, part of the AP-3 complex, an adaptor-related complex which is not clathrin-associated. The complex is associated with the Golgi region as well as more peripheral structures. It facilitates the budding of vesicles from the Golgi membrane and may be directly involved in trafficking to lysosomes. Involved in process of CD8+ T-cell and NK cell degranulation. In concert with the BLOC-1 complex, AP-3 is required to target cargos into vesicles assembled at cell bodies for delivery into neurites and nerve terminals. In Bos taurus (Bovine), this protein is AP-3 complex subunit delta-1 (AP3D1).